A 521-amino-acid chain; its full sequence is FAD-dependent monooxygenase DEP2 (521 aa).

Residues Met1 to Ala22 form the signal peptide. 2 residues coordinate FAD: Asp36 and Arg109. Residues Asn139 and Asn220 are each glycosylated (N-linked (GlcNAc...) asparagine). 2 residues coordinate FAD: Asp310 and Gly323. A helical transmembrane segment spans residues Ile477 to Gly497. Asn515 is a glycosylation site (N-linked (GlcNAc...) asparagine).

Belongs to the paxM FAD-dependent monooxygenase family. Requires FAD as cofactor.

The protein localises to the membrane. It functions in the pathway polyketide biosynthesis. Its function is as follows. Part of the gene cluster that mediates the biosynthesis of depudecin, a highly oxidized eleven-carbon linear polyketide that acts as a histone deacetylase (HDAC) inhibitor and makes a small contribution to pathogenesis. The reducing polyketide synthase DEP5 is the central enzyme in depudecin biosynthesis by yielding the backbone polyketide chain. The monooxygenases DEP2 and DEP4, as well as the uncharacterized protein DEP1, then act as tailoring enzymes to modify the intermediate polyketide chain into depudecin. In Fusarium langsethiae, this protein is FAD-dependent monooxygenase DEP2.